The following is a 98-amino-acid chain: Citrate lyase acyl carrier protein (98 aa).

At Ser14 the chain carries O-(phosphoribosyl dephospho-coenzyme A)serine.

The protein belongs to the CitD family. As to quaternary structure, oligomer with a subunit composition of (alpha,beta,gamma)6.

Its subcellular location is the cytoplasm. Functionally, covalent carrier of the coenzyme of citrate lyase. The polypeptide is Citrate lyase acyl carrier protein (Escherichia coli O127:H6 (strain E2348/69 / EPEC)).